The following is a 219-amino-acid chain: Ran-binding protein 1 homolog c (219 aa).

Residues 1-11 (MASTEPERENR) show a composition bias toward basic and acidic residues. Disordered regions lie at residues 1 to 30 (MAST…VAPI) and 160 to 219 (QVGK…EAST). Over residues 12–23 (EDETEVNEDEDT) the composition is skewed to acidic residues. The 136-residue stretch at 26–161 (QVAPIVRLEE…FTEIAESQQV (136 aa)) folds into the RanBD1 domain. The span at 185 to 219 (SEEKAKEAEEKEPAKEDKETKKEKVEEEKKTEAST) shows a compositional bias: basic and acidic residues.

The protein localises to the nucleus. It is found in the nuclear pore complex. The polypeptide is Ran-binding protein 1 homolog c (RANBP1C) (Arabidopsis thaliana (Mouse-ear cress)).